Reading from the N-terminus, the 367-residue chain is UDP-N-acetylglucosamine--N-acetylmuramyl-(pentapeptide) pyrophosphoryl-undecaprenol N-acetylglucosamine transferase (367 aa).

Residues 15–17 (TGG), Asn126, Arg169, Ser197, and Gln298 each bind UDP-N-acetyl-alpha-D-glucosamine.

The protein belongs to the glycosyltransferase 28 family. MurG subfamily.

The protein localises to the cell inner membrane. It catalyses the reaction di-trans,octa-cis-undecaprenyl diphospho-N-acetyl-alpha-D-muramoyl-L-alanyl-D-glutamyl-meso-2,6-diaminopimeloyl-D-alanyl-D-alanine + UDP-N-acetyl-alpha-D-glucosamine = di-trans,octa-cis-undecaprenyl diphospho-[N-acetyl-alpha-D-glucosaminyl-(1-&gt;4)]-N-acetyl-alpha-D-muramoyl-L-alanyl-D-glutamyl-meso-2,6-diaminopimeloyl-D-alanyl-D-alanine + UDP + H(+). The protein operates within cell wall biogenesis; peptidoglycan biosynthesis. Its function is as follows. Cell wall formation. Catalyzes the transfer of a GlcNAc subunit on undecaprenyl-pyrophosphoryl-MurNAc-pentapeptide (lipid intermediate I) to form undecaprenyl-pyrophosphoryl-MurNAc-(pentapeptide)GlcNAc (lipid intermediate II). This is UDP-N-acetylglucosamine--N-acetylmuramyl-(pentapeptide) pyrophosphoryl-undecaprenol N-acetylglucosamine transferase from Bradyrhizobium sp. (strain BTAi1 / ATCC BAA-1182).